Consider the following 1791-residue polypeptide: Sodium channel protein type 11 subunit alpha (1791 aa).

The Cytoplasmic portion of the chain corresponds to 1–126 (MDDRCYPVIF…SIRSLAIRVS (126 aa)). An I repeat occupies 115–408 (FNSIRSLAIR…VTMAYEEQNK (294 aa)). A helical transmembrane segment spans residues 127–148 (VHSLFSMFIIGTVIINCVFMAT). The Extracellular segment spans residues 149–156 (GPAKNSNS). The chain crosses the membrane as a helical span at residues 157–180 (NNTDIAECVFTGIYIFEALIKILA). Residues 181–192 (RGFILDEFSFLR) lie on the Cytoplasmic side of the membrane. Residues 193–212 (DPWNWLDSIVIGIAIVSYIP) traverse the membrane as a helical segment. Residues 213–219 (GITIKLL) lie on the Extracellular side of the membrane. The chain crosses the membrane as a helical; Voltage-sensor span at residues 220-239 (PLRTFRVFRALKAISVVSRL). Residues 240 to 255 (KVIVGALLRSVKKLVN) lie on the Cytoplasmic side of the membrane. Residues 256–269 (VIILTFFCLSIFAL) form a helical membrane-spanning segment. Over 270-344 (VGQQLFMGSL…PDYNYTNFDN (75 aa)) the chain is Extracellular. The cysteines at positions 283 and 322 are disulfide-linked. 2 N-linked (GlcNAc...) asparagine glycosylation sites follow: N290 and N338. The pore-forming intramembrane region spans 345-369 (FGWSFLAMFRLMTQDSWEKLYQQTL). Over 370–376 (RTTGLYS) the chain is Extracellular. The chain crosses the membrane as a helical span at residues 377-402 (VFFFIVVIFLGSFYLINLTLAVVTMA). The Cytoplasmic segment spans residues 403–572 (YEEQNKNVAA…WLCVKKVLRT (170 aa)). One copy of the II repeat lies at 559–833 (CCPQWLCVKK…EGEARKTKVQ (275 aa)). Residues 573–596 (VMTDPFTELAITICIIINTVFLAM) form a helical membrane-spanning segment. Residues 597–607 (EHHKMEASFEK) are Extracellular-facing. The chain crosses the membrane as a helical span at residues 608 to 631 (MLNIGNLVFTSIFIAEMCLKIIAL). Residues 632–639 (DPYHYFRR) lie on the Cytoplasmic side of the membrane. The chain crosses the membrane as a helical span at residues 640 to 659 (GWNIFDSIVALLSFADVMNC). Over 660–667 (VLQKRSWP) the chain is Extracellular. A helical; Voltage-sensor membrane pass occupies residues 668–687 (FLRSFRVLRVFKLAKSWPTL). Residues 688–702 (NTLIKIIGNSVGALG) lie on the Cytoplasmic side of the membrane. Residues 703–725 (SLTVVLVIVIFIFSVVGMQLFGR) traverse the membrane as a helical segment. Residues 726-753 (SFNSQKSPKLCNPTGPTVSCLRHWHMGD) lie on the Extracellular side of the membrane. The segment at residues 754–774 (FWHSFLVVFRILCGEWIENMW) is an intramembrane region (pore-forming). Residues 775-785 (ECMQEANASSS) lie on the Extracellular side of the membrane. The cysteines at positions 776 and 787 are disulfide-linked. N781 carries an N-linked (GlcNAc...) asparagine glycan. Residues 786-811 (LCVIVFILITVIGKLVVLNLFIALLL) traverse the membrane as a helical segment. Residues 812–1051 (NSFSNEERNG…WWNLRKTCYQ (240 aa)) lie on the Cytoplasmic side of the membrane. The stretch at 1044–1339 (NLRKTCYQIV…KKYYNAMKKL (296 aa)) is one III repeat. Residues 1052–1074 (IVKHSWFESFIIFVILLSSGALI) traverse the membrane as a helical segment. Topologically, residues 1075–1088 (FEDVHLENQPKIQE) are extracellular. Residues 1089–1114 (LLNCTDIIFTHIFILEMVLKWVAFGF) form a helical membrane-spanning segment. The Cytoplasmic portion of the chain corresponds to 1115–1120 (GKYFTS). A helical transmembrane segment spans residues 1121 to 1138 (AWCCLDFIIVIVSVTTLI). Residue N1139 is a topological domain, extracellular. The helical; Voltage-sensor transmembrane segment at 1140–1161 (LMELKSFRTLRALRPLRALSQF) threads the bilayer. The Cytoplasmic segment spans residues 1162–1180 (EGMKVVVNALIGAIPAILN). The chain crosses the membrane as a helical span at residues 1181–1202 (VLLVCLIFWLVFCILGVYFFSG). Residues 1203 to 1243 (KFGKCINGTDSVINYTIITNKSQCESGNFSWINQKVNFDNV) are Extracellular-facing. 4 N-linked (GlcNAc...) asparagine glycosylation sites follow: N1209, N1216, N1222, and N1230. The segment at residues 1244–1265 (GNAYLALLQVATFKGWMDIIYA) is an intramembrane region (pore-forming). Residues 1266-1281 (AVDSTEKEQQPEFESN) lie on the Extracellular side of the membrane. Residues 1282-1308 (SLGYIYFVVFIIFGSFFTLNLFIGVII) form a helical membrane-spanning segment. The Cytoplasmic portion of the chain corresponds to 1309–1361 (DNFNQQQKKLGGQDIFMTEEQKKYYNAMKKLGSKKPQKPIPRPLNKCQGLVFD). An IV repeat occupies 1348–1639 (IPRPLNKCQG…WEKFDPEATQ (292 aa)). Residues 1362-1385 (IVTSQIFDIIIISLIILNMISMMA) traverse the membrane as a helical segment. Topologically, residues 1386-1396 (ESYNQPKAMKS) are extracellular. The chain crosses the membrane as a helical span at residues 1397 to 1420 (ILDHLNWVFVVIFTLECLIKIFAL). Topologically, residues 1421–1426 (RQYYFT) are cytoplasmic. Residues 1427-1450 (NGWNLFDCVVVLLSIVSTMISTLE) traverse the membrane as a helical segment. The Extracellular portion of the chain corresponds to 1451–1461 (NQEHIPFPPTL). The helical; Voltage-sensor transmembrane segment at 1462–1484 (FRIVRLARIGRILRLVRAARGIR) threads the bilayer. Over 1485-1499 (TLLFALMMSLPSLFN) the chain is Cytoplasmic. The chain crosses the membrane as a helical span at residues 1500–1522 (IGLLLFLIMFIYAILGMNWFSKV). At 1523-1536 (NPESGIDDIFNFKT) the chain is on the extracellular side. Residues 1537-1559 (FASSMLCLFQISTSAGWDSLLSP) constitute an intramembrane region (pore-forming). Residues 1560–1579 (MLRSKESCNSSSENCHLPGI) are Extracellular-facing. A glycan (N-linked (GlcNAc...) asparagine) is linked at N1568. Residues 1580 to 1604 (ATSYFVSYIIISFLIVVNMYIAVIL) traverse the membrane as a helical segment. Over 1605-1791 (ENFNTATEES…GVAKGKVHCD (187 aa)) the chain is Cytoplasmic.

Belongs to the sodium channel (TC 1.A.1.10) family. Nav1.9/SCN11A subfamily. In terms of assembly, the voltage-resistant sodium channel consists of an ion conducting pore forming alpha-subunit regulated by one or more auxiliary subunits SCN1B, SCN2B and SCN3B. As to expression, expressed in the dorsal root ganglia and trigeminal ganglia, olfactory bulb, hippocampus, cerebellar cortex, spinal cord, spleen, small intestine and placenta.

It is found in the cell membrane. The enzyme catalyses Na(+)(in) = Na(+)(out). Activity is not sensitive to inhibition by tetrodotoxin. Its function is as follows. Sodium channel mediating the voltage-dependent sodium ion permeability of excitable membranes. Assuming opened or closed conformations in response to the voltage difference across the membrane, the protein forms a sodium-selective channel through which sodium ions may pass in accordance with their electrochemical gradient. Involved in membrane depolarization during action potential in nociceptors which function as key relay stations for the electrical transmission of pain signals from the periphery to the central nervous system. Also involved in rapid BDNF-evoked neuronal depolarization. The sequence is that of Sodium channel protein type 11 subunit alpha from Homo sapiens (Human).